The following is a 275-amino-acid chain: Epidermal growth factor-like protein 7 (275 aa).

A signal peptide spans 1-21; the sequence is MWGSGELLVAWFLVLAADGTT. Residues 28-105 form the EMI domain; that stretch reads SRRVCTVGIS…TSGLPGACGA (78 aa). 8 disulfides stabilise this stretch: Cys32/Cys90, Cys57/Cys63, Cys89/Cys103, Cys108/Cys118, Cys112/Cys124, Cys126/Cys135, Cys142/Cys153, and Cys149/Cys162. The EGF-like 1 domain occupies 104–136; that stretch reads GAAICQPPCGNGGSCIRPGHCRCPVGWQGDTCQ. A Cell attachment site motif is present at residues 131 to 133; the sequence is QGD. One can recognise an EGF-like 2; calcium-binding domain in the interval 138–178; it reads DVDECSTGEASCPQRCVNTVGSYWCQGWEGQSPSADGTRCL. Positions 173-193 are disordered; the sequence is DGTRCLSKEGPSPVAPNPTAG. The stretch at 196–220 forms a coiled coil; it reads SMAREEVYRLQARVDVLEQKLQLVL.

In terms of assembly, interacts with ITGAV/ITGB3 in an RGD-dependent manner, increasing endothelial cell's motility. Expressed specifically by endothelial cells of the highly vascularized organs heart, lung and kidney.

It localises to the secreted. The protein localises to the extracellular space. Its function is as follows. Regulates vascular tubulogenesis in vivo. Inhibits platelet-derived growth factor (PDGF)-BB-induced smooth muscle cell migration and promotes endothelial cell adhesion to the extracellular matrix and angiogenesis. This Mus musculus (Mouse) protein is Epidermal growth factor-like protein 7 (Egfl7).